The primary structure comprises 346 residues: NADH-ubiquinone oxidoreductase chain 2 (346 aa).

10 consecutive transmembrane segments (helical) span residues 25–45 (HWIL…PLIS), 52–72 (AIEA…LILF), 95–115 (CLML…HFWF), 124–144 (LITA…LLLL), 149–169 (LNTT…GWMG), 178–198 (ILAF…SYNP), 200–220 (LTIL…LSLA), 242–262 (ATVM…GFMP), 274–294 (EMTP…FFYL), and 326–346 (AILT…ITML).

It belongs to the complex I subunit 2 family. As to quaternary structure, core subunit of respiratory chain NADH dehydrogenase (Complex I) which is composed of 45 different subunits.

It localises to the mitochondrion inner membrane. It catalyses the reaction a ubiquinone + NADH + 5 H(+)(in) = a ubiquinol + NAD(+) + 4 H(+)(out). Its function is as follows. Core subunit of the mitochondrial membrane respiratory chain NADH dehydrogenase (Complex I) which catalyzes electron transfer from NADH through the respiratory chain, using ubiquinone as an electron acceptor. Essential for the catalytic activity and assembly of complex I. This chain is NADH-ubiquinone oxidoreductase chain 2 (MT-ND2), found in Gallus gallus (Chicken).